The primary structure comprises 711 residues: Polyribonucleotide nucleotidyltransferase (711 aa).

Positions 486 and 492 each coordinate Mg(2+). The 60-residue stretch at Pro553 to Ile612 folds into the KH domain. One can recognise an S1 motif domain in the interval Gly622–Lys690. A disordered region spans residues Ile689 to Glu711. The segment covering Glu694–Glu711 has biased composition (low complexity).

The protein belongs to the polyribonucleotide nucleotidyltransferase family. Component of the RNA degradosome, which is a multiprotein complex involved in RNA processing and mRNA degradation. It depends on Mg(2+) as a cofactor.

Its subcellular location is the cytoplasm. It catalyses the reaction RNA(n+1) + phosphate = RNA(n) + a ribonucleoside 5'-diphosphate. Functionally, involved in mRNA degradation. Catalyzes the phosphorolysis of single-stranded polyribonucleotides processively in the 3'- to 5'-direction. The polypeptide is Polyribonucleotide nucleotidyltransferase (Escherichia fergusonii (strain ATCC 35469 / DSM 13698 / CCUG 18766 / IAM 14443 / JCM 21226 / LMG 7866 / NBRC 102419 / NCTC 12128 / CDC 0568-73)).